A 301-amino-acid polypeptide reads, in one-letter code: Probable alpha-L-glutamate ligase (301 aa).

An ATP-grasp domain is found at 104 to 287 (LQLLSRRGIG…VAGMIIEHLE (184 aa)). ATP is bound by residues Lys141, 178–179 (EY), Asp187, and 211–213 (RSN). Asp248, Glu260, and Asn262 together coordinate Mg(2+). Residues Asp248, Glu260, and Asn262 each coordinate Mn(2+).

It belongs to the RimK family. It depends on Mg(2+) as a cofactor. Mn(2+) serves as cofactor.

This is Probable alpha-L-glutamate ligase from Pseudomonas putida (strain W619).